A 185-amino-acid polypeptide reads, in one-letter code: MKLIAGLGNPGKKYDQTKHNTGFMALDHYLSKNNLDLDKDKFEGLWTKQKVNGEDVIFLEPQTFMNDSGKSIAQVANFFKIAPEDILVIHDDMDMPIGKIRIRANGKSGGHNGIKSIMACLGTNNFNRLKIGIRHPQKESVVSWVLSPFNDEQQKLMDAAFEVSENIINDFIKGKNAQYLMNQYN.

Residue Tyr14 coordinates tRNA. The active-site Proton acceptor is His19. TRNA-binding residues include Phe64, Asn66, and Asn112.

This sequence belongs to the PTH family. Monomer.

It localises to the cytoplasm. It catalyses the reaction an N-acyl-L-alpha-aminoacyl-tRNA + H2O = an N-acyl-L-amino acid + a tRNA + H(+). Its function is as follows. Hydrolyzes ribosome-free peptidyl-tRNAs (with 1 or more amino acids incorporated), which drop off the ribosome during protein synthesis, or as a result of ribosome stalling. In terms of biological role, catalyzes the release of premature peptidyl moieties from peptidyl-tRNA molecules trapped in stalled 50S ribosomal subunits, and thus maintains levels of free tRNAs and 50S ribosomes. In Lactobacillus gasseri (strain ATCC 33323 / DSM 20243 / BCRC 14619 / CIP 102991 / JCM 1131 / KCTC 3163 / NCIMB 11718 / NCTC 13722 / AM63), this protein is Peptidyl-tRNA hydrolase.